We begin with the raw amino-acid sequence, 408 residues long: 3-ketoacyl-CoA thiolase A, peroxisomal (408 aa).

The Acyl-thioester intermediate role is filled by cysteine 112. Active-site proton acceptor residues include histidine 366 and cysteine 394.

Belongs to the thiolase-like superfamily. Thiolase family. In terms of assembly, homodimer.

The protein localises to the peroxisome. The enzyme catalyses an acyl-CoA + acetyl-CoA = a 3-oxoacyl-CoA + CoA. The protein operates within lipid metabolism; fatty acid metabolism. The chain is 3-ketoacyl-CoA thiolase A, peroxisomal from Candida tropicalis (Yeast).